A 64-amino-acid polypeptide reads, in one-letter code: Prokaryotic ubiquitin-like protein Pup (64 aa).

2 stretches are compositionally biased toward basic and acidic residues: residues methionine 1–glycine 11 and glycine 25–glutamate 34. A disordered region spans residues methionine 1–aspartate 38. The ARC ATPase binding stretch occupies residues proline 21–tyrosine 58. Residues alanine 24–glutamate 52 adopt a coiled-coil conformation. Glutamine 64 bears the Deamidated glutamine mark. Residue glutamine 64 forms an Isoglutamyl lysine isopeptide (Gln-Lys) (interchain with K-? in acceptor proteins) linkage.

Belongs to the prokaryotic ubiquitin-like protein family. In terms of assembly, strongly interacts with the proteasome-associated ATPase ARC through a hydrophobic interface; the interacting region of Pup lies in its C-terminal half. There is one Pup binding site per ARC hexamer ring. In terms of processing, is modified by deamidation of its C-terminal glutamine to glutamate by the deamidase Dop, a prerequisite to the subsequent pupylation process.

It participates in protein degradation; proteasomal Pup-dependent pathway. In terms of biological role, protein modifier that is covalently attached to lysine residues of substrate proteins, thereby targeting them for proteasomal degradation. The tagging system is termed pupylation. The polypeptide is Prokaryotic ubiquitin-like protein Pup (Nocardia farcinica (strain IFM 10152)).